We begin with the raw amino-acid sequence, 80 residues long: Exodeoxyribonuclease 7 small subunit (80 aa).

It belongs to the XseB family. As to quaternary structure, heterooligomer composed of large and small subunits.

The protein localises to the cytoplasm. The enzyme catalyses Exonucleolytic cleavage in either 5'- to 3'- or 3'- to 5'-direction to yield nucleoside 5'-phosphates.. Functionally, bidirectionally degrades single-stranded DNA into large acid-insoluble oligonucleotides, which are then degraded further into small acid-soluble oligonucleotides. The protein is Exodeoxyribonuclease 7 small subunit of Halalkalibacterium halodurans (strain ATCC BAA-125 / DSM 18197 / FERM 7344 / JCM 9153 / C-125) (Bacillus halodurans).